The primary structure comprises 537 residues: Phosphoenolpyruvate carboxykinase (ATP) (537 aa).

Substrate-binding residues include Arg-61, Tyr-195, and Lys-201. Residues Lys-201, His-220, and 236-244 (GLSGTGKTT) contribute to the ATP site. Residues Lys-201 and His-220 each coordinate Mn(2+). Mn(2+) is bound at residue Asp-257. ATP contacts are provided by Glu-285, Arg-323, and Thr-448. Residue Arg-323 coordinates substrate.

This sequence belongs to the phosphoenolpyruvate carboxykinase (ATP) family. Mn(2+) serves as cofactor.

Its subcellular location is the cytoplasm. The enzyme catalyses oxaloacetate + ATP = phosphoenolpyruvate + ADP + CO2. Its pathway is carbohydrate biosynthesis; gluconeogenesis. Involved in the gluconeogenesis. Catalyzes the conversion of oxaloacetate (OAA) to phosphoenolpyruvate (PEP) through direct phosphoryl transfer between the nucleoside triphosphate and OAA. This is Phosphoenolpyruvate carboxykinase (ATP) from Azorhizobium caulinodans (strain ATCC 43989 / DSM 5975 / JCM 20966 / LMG 6465 / NBRC 14845 / NCIMB 13405 / ORS 571).